Reading from the N-terminus, the 635-residue chain is MSAEDILNEIKAAVINKAPGNAVITDVEFEGSEVVIYAKNPELFSNNLIKEFARDFRKRLAIRPDPSVLVEPDIAKDKILKIVPEDAEITNCIFDANTGEVIIESKKPGLVIGKEGSTLEDIKKAIQWAPKPVRTPPIPSDTIKAIRATMYRERADVKDILRRIGRRIHRDVRLRDDSWVRTSFLGGSREVGRTCLYHQTPESRILVDCGINIAVEDEKAFPHFDAPEFSIEEIDAVVVTHAHLDHCGFIPGLFRYGYDGPVYCTKPTRDLMTLLQKDYVDITEKEGKNVPYSSKDIKNCIKHTIPLDYGVTTDIAPAIKLTMHNAGHILGSAIAHCHVGDGLYNVAYTGDIKFEASRLLEPAVCQFPRLETLIIESTYGGYDDVLPERDETEKEFLRVIAETIARKGKAIIPVFGIGRAQELMLVLEEGYNQGIFNAPVYLDGMIWEATAIHTAYPEYLSKNMRNRIFHEGDNPFLSEVFKKVKNTNDRRNIMDSDEPGIILTTSGMLSGGPSVEYFKNLADDEKNSIVFVGYQSEGTLGRKIQKGFKEIPLMGKNGRSKAVKVNLSVHTLEGFSGHSDRKQLIKYLRKLKPIPDRILTVHGEVSKCIDLASTAYKLFKKETKAPMNLDSIRLR.

KHa regions lie at residues 1–69 (MSAE…PSVL) and 4–69 (EDIL…PSVL). The segment at 70 to 137 (VEPDIAKDKI…WAPKPVRTPP (68 aa)) is KHb. 2 metallo-beta-lactamase N-terminus regions span residues 179–382 (WVRT…YGGY) and 179–383 (WVRT…GGYD). Beta-Casp regions lie at residues 180–577 (VRTS…GFSG) and 383–576 (DDVL…EGFS). Residues histidine 241, histidine 243, aspartate 245, histidine 246, histidine 328, and aspartate 351 each contribute to the Zn(2+) site. Metallo-beta-lactamase C-terminus stretches follow at residues 577–635 (GHSD…IRLR) and 578–635 (HSDR…IRLR). Histidine 602 is a binding site for Zn(2+).

This sequence belongs to the metallo-beta-lactamase superfamily. RNA-metabolizing metallo-beta-lactamase-like family. FttA subfamily. Homodimer. Interacts with RNA polymerase (RNAP); interaction is not dependent on DNA or RNA. Interacts with the Spt4-Spt5 complex. It depends on Zn(2+) as a cofactor.

It is found in the chromosome. In terms of biological role, terminates transcription on the whole genome. Termination is linked to FttA-mediated RNA cleavage and does not require NTP hydrolysis. Cleaves endonucleolytically at the RNA exit channel of RNA polymerase (RNAP); the 5'-3' exonuclease activity of this protein degrades the nascent RNA released from RNAP. Functionally, terminates transcription genome-wide. Transcription termination is most effective in vivo on RNAs with more than one U4-tract in their 3'-ends (including non-protein coding RNAs); U4-tracts are recognized by this protein. Also plays a role in termination of RNAs without U-tracts by an unknown mechanism. Has endonuclease activity after U-rich tracts in transcription termination sites. Binds RNA at U4-tracts found directly upstream of the experimentally determined transcription termination sites; binds preferentially to RNAs with more U4-tracts at their 3'-ends. In Methanococcus maripaludis (strain DSM 14266 / JCM 13030 / NBRC 101832 / S2 / LL), this protein is Transcription termination factor FttA.